The sequence spans 657 residues: Glycogen debranching enzyme (657 aa).

D336 functions as the Nucleophile in the catalytic mechanism. E371 (proton donor) is an active-site residue. The segment at 460-479 (ANGEENRDGTNNNYSNNHGK) is disordered.

This sequence belongs to the glycosyl hydrolase 13 family.

It catalyses the reaction Hydrolysis of (1-&gt;6)-alpha-D-glucosidic linkages to branches with degrees of polymerization of three or four glucose residues in limit dextrin.. It functions in the pathway glycan degradation; glycogen degradation. In terms of biological role, removes maltotriose and maltotetraose chains that are attached by 1,6-alpha-linkage to the limit dextrin main chain, generating a debranched limit dextrin. The sequence is that of Glycogen debranching enzyme from Escherichia coli O17:K52:H18 (strain UMN026 / ExPEC).